The following is a 359-amino-acid chain: Dual-specificity RNA methyltransferase RlmN (359 aa).

E90 (proton acceptor) is an active-site residue. A Radical SAM core domain is found at 109–342 (HQERYTVCIS…CTIRESKGLD (234 aa)). Residues C116 and C347 are joined by a disulfide bond. Positions 123, 127, and 130 each coordinate [4Fe-4S] cluster. S-adenosyl-L-methionine is bound by residues 173 to 174 (GE), S205, 228 to 230 (SLH), and N304. Catalysis depends on C347, which acts as the S-methylcysteine intermediate.

The protein belongs to the radical SAM superfamily. RlmN family. It depends on [4Fe-4S] cluster as a cofactor.

It localises to the cytoplasm. It carries out the reaction adenosine(2503) in 23S rRNA + 2 reduced [2Fe-2S]-[ferredoxin] + 2 S-adenosyl-L-methionine = 2-methyladenosine(2503) in 23S rRNA + 5'-deoxyadenosine + L-methionine + 2 oxidized [2Fe-2S]-[ferredoxin] + S-adenosyl-L-homocysteine. It catalyses the reaction adenosine(37) in tRNA + 2 reduced [2Fe-2S]-[ferredoxin] + 2 S-adenosyl-L-methionine = 2-methyladenosine(37) in tRNA + 5'-deoxyadenosine + L-methionine + 2 oxidized [2Fe-2S]-[ferredoxin] + S-adenosyl-L-homocysteine. Its function is as follows. Specifically methylates position 2 of adenine 2503 in 23S rRNA and position 2 of adenine 37 in tRNAs. m2A2503 modification seems to play a crucial role in the proofreading step occurring at the peptidyl transferase center and thus would serve to optimize ribosomal fidelity. The protein is Dual-specificity RNA methyltransferase RlmN of Sulfurovum sp. (strain NBC37-1).